An 876-amino-acid chain; its full sequence is Alanine--tRNA ligase (876 aa).

Residues His-566, His-570, Cys-667, and His-671 each contribute to the Zn(2+) site.

This sequence belongs to the class-II aminoacyl-tRNA synthetase family. It depends on Zn(2+) as a cofactor.

It localises to the cytoplasm. It catalyses the reaction tRNA(Ala) + L-alanine + ATP = L-alanyl-tRNA(Ala) + AMP + diphosphate. In terms of biological role, catalyzes the attachment of alanine to tRNA(Ala) in a two-step reaction: alanine is first activated by ATP to form Ala-AMP and then transferred to the acceptor end of tRNA(Ala). Also edits incorrectly charged Ser-tRNA(Ala) and Gly-tRNA(Ala) via its editing domain. In Albidiferax ferrireducens (strain ATCC BAA-621 / DSM 15236 / T118) (Rhodoferax ferrireducens), this protein is Alanine--tRNA ligase.